A 628-amino-acid polypeptide reads, in one-letter code: Probable alpha-L-arabinofuranosidase A (628 aa).

The first 25 residues, methionine 1 to glycine 25, serve as a signal peptide directing secretion. 9 N-linked (GlcNAc...) asparagine glycosylation sites follow: asparagine 36, asparagine 51, asparagine 74, asparagine 152, asparagine 164, asparagine 260, asparagine 359, asparagine 404, and asparagine 493.

This sequence belongs to the glycosyl hydrolase 51 family.

It localises to the secreted. It catalyses the reaction Hydrolysis of terminal non-reducing alpha-L-arabinofuranoside residues in alpha-L-arabinosides.. Its pathway is glycan metabolism; L-arabinan degradation. Its function is as follows. Alpha-L-arabinofuranosidase involved in the degradation of arabinoxylan, a major component of plant hemicellulose. Acts only on small linear 1,5-alpha-linked L-arabinofuranosyl oligosaccharides. The polypeptide is Probable alpha-L-arabinofuranosidase A (abfA) (Aspergillus terreus (strain NIH 2624 / FGSC A1156)).